We begin with the raw amino-acid sequence, 306 residues long: Follistatin-related protein 1 (306 aa).

The first 18 residues, 1 to 18, serve as a signal peptide directing secretion; that stretch reads MWKRWLALALVAVAWVRA. Positions 28 to 51 constitute a Follistatin-like domain; sequence ICANVFCGAGRECAVTEKGEPTCL. 5 disulfides stabilise this stretch: cysteine 29/cysteine 40, cysteine 34/cysteine 50, cysteine 52/cysteine 82, cysteine 56/cysteine 75, and cysteine 64/cysteine 96. The 53-residue stretch at 46–98 folds into the Kazal-like domain; that stretch reads GEPTCLCIEQCKPHKRPVCGSNGKTYLNHCELHRDACLTGSKIQVDYDGHCKE. An N-linked (GlcNAc...) asparagine glycan is attached at asparagine 142. The region spanning 142–176 is the EF-hand 1 domain; it reads NYSEILDKYFKNFDNGDSRLDSSEFLKFVEQNETA. At serine 163 the chain carries Phosphoserine. N-linked (GlcNAc...) asparagine glycans are attached at residues asparagine 173 and asparagine 178. The region spanning 191 to 226 is the EF-hand 2 domain; that stretch reads LRGLCVDALIELSDENADWKLSFQEFLKCLNPSFNP. In terms of domain architecture, VWFC spans 231–285; the sequence is CALEDETYADGAETEVDCNRCVCACGNWVCTAMTCDGKNQKGAQTQTEEEMTRYV.

Homodimer. Interacts with SCN10A. Interacts with DIP2A; DIP2A may act as a cell surface receptor for FSTL1. Interacts with BMP4. Interacts with CD14; this interaction promotes TL4-mediated signaling cascade.

The protein resides in the secreted. Its function is as follows. Secreted glycoprotein that is involved in various physiological processes, such as angiogenesis, regulation of the immune response, cell proliferation and differentiation. Plays a role in the development of the central nervous system, skeletal system, lungs, and ureter. Promotes endothelial cell survival, migration and differentiation into network structures in an AKT-dependent manner. Also promotes survival of cardiac myocytes. Initiates various signaling cascades by activating different receptors on the cell surface such as DIP2A, TLR4 or BMP receptors. The chain is Follistatin-related protein 1 (FSTL1) from Pongo abelii (Sumatran orangutan).